A 663-amino-acid polypeptide reads, in one-letter code: Protein KINESIN LIGHT CHAIN-RELATED 2 (663 aa).

Residues 1 to 14 are compositionally biased toward basic and acidic residues; sequence MDVGESNERVKDDS. Disordered regions lie at residues 1–24 and 86–146; these read MDVG…RSPL and GESK…KVSV. Position 19 is a phosphoserine (S19). The segment covering 86 to 100 has biased composition (basic and acidic residues); sequence GESKKEIILEKKEES. A compositionally biased stretch (polar residues) spans 102–111; it reads GEGSLSQKKP. TPR repeat units lie at residues 147–181, 200–233, 243–276, 285–318, 329–363, 369–402, 411–444, 454–487, 495–528, 537–570, and 579–612; these read DEES…ALRA, VMSL…PMIE, FAGC…QRQV, GETC…HKEN, AADR…SSQN, AAVD…FKQG, ALVY…YLKP, ATGF…YANA, AGIE…FRNS, GIAL…LEKE, and LAVY…REEK.

This sequence belongs to the kinesin light chain family.

The protein is Protein KINESIN LIGHT CHAIN-RELATED 2 of Arabidopsis thaliana (Mouse-ear cress).